Here is a 2197-residue protein sequence, read N- to C-terminus: Protein Ycf2 (2197 aa).

Gly1539–Ser1546 is an ATP binding site.

The protein belongs to the Ycf2 family.

The protein localises to the plastid. It localises to the chloroplast stroma. Its function is as follows. Probable ATPase of unknown function. Its presence in a non-photosynthetic plant (Epifagus virginiana) and experiments in tobacco indicate that it has an essential function which is probably not related to photosynthesis. This is Protein Ycf2 from Ipomoea purpurea (Common morning glory).